Here is a 246-residue protein sequence, read N- to C-terminus: MAGHSKWHNIQHRKGIQDVKRGKIFAKFIKEIIIATKTGGSVIENNPSLRMVIDRALAANMKRNTIENAVKRGSCDLDDKNYDEVRYEGYGLAGTAIIVDTLTDNRNRTVANIRHAFSKYGGNLSIEGSVSYLFIKQGFINFETGDEEQIMEVALDAGAKDIITNDNGSIYVITTTEDFFTIRNTLITARLEPSHSEVTMKPINYIKLNLHNTEKFIKLTDSLKDLDDTREVYHNADISDEIITQF.

Belongs to the TACO1 family.

The protein localises to the cytoplasm. The polypeptide is Probable transcriptional regulatory protein COSY_0365 (Vesicomyosocius okutanii subsp. Calyptogena okutanii (strain HA)).